The sequence spans 254 residues: Ribosomal RNA small subunit methyltransferase A (254 aa).

S-adenosyl-L-methionine contacts are provided by asparagine 12, leucine 14, glycine 38, glutamate 59, aspartate 83, and asparagine 100.

It belongs to the class I-like SAM-binding methyltransferase superfamily. rRNA adenine N(6)-methyltransferase family. RsmA subfamily.

It localises to the cytoplasm. The enzyme catalyses adenosine(1518)/adenosine(1519) in 16S rRNA + 4 S-adenosyl-L-methionine = N(6)-dimethyladenosine(1518)/N(6)-dimethyladenosine(1519) in 16S rRNA + 4 S-adenosyl-L-homocysteine + 4 H(+). In terms of biological role, specifically dimethylates two adjacent adenosines (A1518 and A1519) in the loop of a conserved hairpin near the 3'-end of 16S rRNA in the 30S particle. May play a critical role in biogenesis of 30S subunits. The polypeptide is Ribosomal RNA small subunit methyltransferase A (Mycoplasma mobile (strain ATCC 43663 / 163K / NCTC 11711) (Mesomycoplasma mobile)).